Reading from the N-terminus, the 431-residue chain is Anaerobic glycerol-3-phosphate dehydrogenase subunit B (431 aa).

This sequence belongs to the anaerobic G-3-P dehydrogenase subunit B family. As to quaternary structure, composed of a catalytic GlpA/B dimer and of membrane bound GlpC. Requires FMN as cofactor.

The enzyme catalyses a quinone + sn-glycerol 3-phosphate = dihydroxyacetone phosphate + a quinol. It participates in polyol metabolism; glycerol degradation via glycerol kinase pathway; glycerone phosphate from sn-glycerol 3-phosphate (anaerobic route): step 1/1. Functionally, conversion of glycerol 3-phosphate to dihydroxyacetone. Uses fumarate or nitrate as electron acceptor. The polypeptide is Anaerobic glycerol-3-phosphate dehydrogenase subunit B (Mannheimia succiniciproducens (strain KCTC 0769BP / MBEL55E)).